Reading from the N-terminus, the 81-residue chain is Cell division protein ZapB (81 aa).

Positions 5–81 (LEVFEKLESK…QALLGRMEEV (77 aa)) form a coiled coil. Positions 43–64 (VHSAQNGREELERENQQLREQQ) are disordered. A compositionally biased stretch (basic and acidic residues) spans 49-59 (GREELERENQQ).

The protein belongs to the ZapB family. Homodimer. The ends of the coiled-coil dimer bind to each other, forming polymers. Interacts with FtsZ.

Its subcellular location is the cytoplasm. Non-essential, abundant cell division factor that is required for proper Z-ring formation. It is recruited early to the divisome by direct interaction with FtsZ, stimulating Z-ring assembly and thereby promoting cell division earlier in the cell cycle. Its recruitment to the Z-ring requires functional FtsA or ZipA. The sequence is that of Cell division protein ZapB from Enterobacter sp. (strain 638).